We begin with the raw amino-acid sequence, 1136 residues long: Rho GTPase-activating protein 45 (1136 aa).

Disordered stretches follow at residues 1-73 (MFSR…RHAS) and 91-110 (HRSPLTAASPGELPTEGAGP). A phosphoserine mark is found at S23, S25, S73, S93, and S99. The region spanning 269-539 (EEVDVLLQRC…SSKLYDPGQQ (271 aa)) is the F-BAR domain. Coiled coils occupy residues 376–412 (EHEKRRKEIKEAWHRAQRKLQEAESNLRKAKQGYVQR) and 440–499 (TATK…RQSD). 4 positions are modified to phosphoserine: S569, S578, S592, and S619. The segment at 583–662 (DVARPEAAGS…SSTEELVDPD (80 aa)) is disordered. Residues 646 to 655 (TSSSGTMSST) are compositionally biased toward low complexity. The Phorbol-ester/DAG-type zinc-finger motif lies at 702–747 (THRLRKLRTPAKCRECNSYVYFQGAECEECCLACHKKCLETLAIQC). Residues 761–974 (QDFSHAARSA…TLIVHYGLVF (214 aa)) form the Rho-GAP domain. A phosphoserine mark is found at S949, S1027, S1030, and S1032. The interval 1061 to 1136 (EASLEVASGS…SCRERQPEFV (76 aa)) is disordered. Residues 1095–1109 (QQLSGFNTNQSNNVL) are compositionally biased toward polar residues.

As to quaternary structure, HA-1 forms a complex with MHC class I HLA-A*0201. As to expression, expressed on cells of the hematopoietic lineage. Detected in dendritic cells and epidermal Langerhans cells. Expressed in peripheral blood mononuclear cells, in all leukemia/lymphoma cell lines. Detected also in some solid tumors and tissues such as cancerous and non-cancerous tissue.

It is found in the cytoplasm. It localises to the cell projection. The protein resides in the ruffle membrane. Contains a GTPase activator for the Rho-type GTPases (RhoGAP) domain that would be able to negatively regulate the actin cytoskeleton as well as cell spreading. However, also contains N-terminally a BAR-domin which is able to play an autoinhibitory effect on this RhoGAP activity. Its function is as follows. Precursor of the histocompatibility antigen HA-1. More generally, minor histocompatibility antigens (mHags) refer to immunogenic peptide which, when complexed with MHC, can generate an immune response after recognition by specific T-cells. The peptides are derived from polymorphic intracellular proteins, which are cleaved by normal pathways of antigen processing. The binding of these peptides to MHC class I or class II molecules and its expression on the cell surface can stimulate T-cell responses and thereby trigger graft rejection or graft-versus-host disease (GVHD) after hematopoietic stem cell transplantation from HLA-identical sibling donor. GVHD is a frequent complication after bone marrow transplantation (BMT), due to mismatch of minor histocompatibility antigen in HLA-matched sibling marrow transplants. Specifically, mismatching for mHag HA-1 which is recognized as immunodominant, is shown to be associated with the development of severe GVHD after HLA-identical BMT. HA-1 is presented to the cell surface by MHC class I HLA-A*0201, but also by other HLA-A alleles. This complex specifically elicits donor-cytotoxic T-lymphocyte (CTL) reactivity against hematologic malignancies after treatment by HLA-identical allogenic BMT. It induces cell recognition and lysis by CTL. This chain is Rho GTPase-activating protein 45, found in Homo sapiens (Human).